A 432-amino-acid chain; its full sequence is Adenylosuccinate synthetase (432 aa).

Residues 12 to 18 and 40 to 42 each bind GTP; these read GDEGKGK and GHT. Residue Asp13 is the Proton acceptor of the active site. Residues Asp13 and Gly40 each coordinate Mg(2+). IMP is bound by residues 13-16, 38-41, Thr130, Arg144, Gln226, Thr241, and Arg305; these read DEGK and NAGH. His41 functions as the Proton donor in the catalytic mechanism. 301-307 contributes to the substrate binding site; sequence STTGRSR. GTP contacts are provided by residues Arg307, 333–335, and 415–417; these read KLD and SVG.

The protein belongs to the adenylosuccinate synthetase family. In terms of assembly, homodimer. Mg(2+) is required as a cofactor.

It is found in the cytoplasm. It catalyses the reaction IMP + L-aspartate + GTP = N(6)-(1,2-dicarboxyethyl)-AMP + GDP + phosphate + 2 H(+). It participates in purine metabolism; AMP biosynthesis via de novo pathway; AMP from IMP: step 1/2. In terms of biological role, plays an important role in the de novo pathway of purine nucleotide biosynthesis. Catalyzes the first committed step in the biosynthesis of AMP from IMP. In Bdellovibrio bacteriovorus (strain ATCC 15356 / DSM 50701 / NCIMB 9529 / HD100), this protein is Adenylosuccinate synthetase.